The chain runs to 439 residues: SH3 domain-containing protein 1 (439 aa).

One can recognise a BAR domain in the interval 32 to 263 (DAVVVDEEEL…MIAEEEAIGS (232 aa)). Residues 277–291 (SLPQQEPNSNSSGEI) show a composition bias toward polar residues. Residues 277 to 362 (SLPQQEPNSN…SDDHHNHQLL (86 aa)) are disordered. The segment covering 318–358 (SPKDEMKSSPQEETKSNHQKEIKSSPQEEIKKSNGSDDHHN) has biased composition (basic and acidic residues). An SH3 domain is found at 366 to 425 (DSYFLAKVVHPFDAQAPGELSLAVDDYVIVRQVAGTGWSEGEYKGKAGWFPSAYVEKQEK).

Interacts with the auxilin-like protein AUXI1. As to expression, highly expressed in flowers. Detected in seedlings, roots, leaves and stems.

The protein resides in the cytoplasmic vesicle. It is found in the clathrin-coated vesicle. The protein localises to the cell membrane. Its subcellular location is the golgi apparatus. It localises to the trans-Golgi network. The protein resides in the endoplasmic reticulum. Functionally, lipid binding protein bound strongly to phosphatidic acid, phosphatidylinositol-4-phosphate and phosphatidylinositol-4,5-bisphosphate. Binds actin in vitro. Involved in trafficking and modification of clathrin-coated vesicles. This Arabidopsis thaliana (Mouse-ear cress) protein is SH3 domain-containing protein 1 (SH3P1).